Reading from the N-terminus, the 463-residue chain is Exodeoxyribonuclease 7 large subunit (463 aa).

This sequence belongs to the XseA family. Heterooligomer composed of large and small subunits.

It is found in the cytoplasm. The catalysed reaction is Exonucleolytic cleavage in either 5'- to 3'- or 3'- to 5'-direction to yield nucleoside 5'-phosphates.. Functionally, bidirectionally degrades single-stranded DNA into large acid-insoluble oligonucleotides, which are then degraded further into small acid-soluble oligonucleotides. This Bordetella pertussis (strain Tohama I / ATCC BAA-589 / NCTC 13251) protein is Exodeoxyribonuclease 7 large subunit.